Here is a 553-residue protein sequence, read N- to C-terminus: HTH-type transcriptional regulator SgrR (553 aa).

In terms of domain architecture, HTH marR-type spans 1-117; it reads MSTARLQQQF…LSQLGRSFRQ (117 aa). The H-T-H motif DNA-binding region spans 26-49; it reads LQELAEVLCCSRRHVRSLLGSMQQ. The segment at 163–494 is solute-binding; that stretch reads ELEPDLSHHW…EELHQDVELW (332 aa).

Activates the small RNA gene sgrS under glucose-phosphate stress conditions as well as yfdZ. Represses its own transcription under both stress and non-stress conditions. Might act as a sensor of the intracellular accumulation of phosphoglucose by binding these molecules in its C-terminal solute-binding domain. The polypeptide is HTH-type transcriptional regulator SgrR (Yersinia enterocolitica serotype O:8 / biotype 1B (strain NCTC 13174 / 8081)).